We begin with the raw amino-acid sequence, 711 residues long: Ribosomal RNA large subunit methyltransferase K/L (711 aa).

The THUMP domain occupies 43–154 (LAYRITLWSR…RGQITLGINF (112 aa)).

The protein belongs to the methyltransferase superfamily. RlmKL family.

The protein resides in the cytoplasm. The enzyme catalyses guanosine(2445) in 23S rRNA + S-adenosyl-L-methionine = N(2)-methylguanosine(2445) in 23S rRNA + S-adenosyl-L-homocysteine + H(+). It carries out the reaction guanosine(2069) in 23S rRNA + S-adenosyl-L-methionine = N(2)-methylguanosine(2069) in 23S rRNA + S-adenosyl-L-homocysteine + H(+). Functionally, specifically methylates the guanine in position 2445 (m2G2445) and the guanine in position 2069 (m7G2069) of 23S rRNA. This is Ribosomal RNA large subunit methyltransferase K/L from Shewanella loihica (strain ATCC BAA-1088 / PV-4).